The primary structure comprises 327 residues: Dolichyl-phosphate beta-glucosyltransferase ALG5D (327 aa).

Topologically, residues 1–6 (MEKQLA) are lumenal. Residues 7-27 (ELSVYILIIFLILGFIMAILM) form a helical membrane-spanning segment. Topologically, residues 28–327 (RFGDDTTLFD…NIWTIRDRKF (300 aa)) are cytoplasmic.

It belongs to the glycosyltransferase 2 family.

Its subcellular location is the endoplasmic reticulum membrane. It catalyses the reaction a di-trans,poly-cis-dolichyl phosphate + UDP-alpha-D-glucose = a di-trans,poly-cis-dolichyl beta-D-glucosyl phosphate + UDP. The protein operates within protein modification; protein glycosylation. Its function is as follows. Dolichyl-phosphate beta-glucosyltransferase involved in the glycosylation of glycoproteins through the synthesis of dolichyl beta-D-glucosyl phosphate which serves as a sugar donor for transfer of three glucose residues to the Man-9-GlcNAc-2-PP-dolichol precursor to N-glycans. This is Dolichyl-phosphate beta-glucosyltransferase ALG5D from Trichomonas vaginalis (strain ATCC PRA-98 / G3).